We begin with the raw amino-acid sequence, 451 residues long: Eukaryotic translation initiation factor 3 subunit E (451 aa).

One can recognise a PCI domain in the interval 256 to 425 (TDLFFSPAYI…GTVIMNHPPQ (170 aa)).

The protein belongs to the eIF-3 subunit E family. In terms of assembly, component of the eukaryotic translation initiation factor 3 (eIF-3) complex.

It is found in the cytoplasm. In terms of biological role, component of the eukaryotic translation initiation factor 3 (eIF-3) complex, which is involved in protein synthesis of a specialized repertoire of mRNAs and, together with other initiation factors, stimulates binding of mRNA and methionyl-tRNAi to the 40S ribosome. The eIF-3 complex specifically targets and initiates translation of a subset of mRNAs involved in cell proliferation. This Aspergillus fumigatus (strain CBS 144.89 / FGSC A1163 / CEA10) (Neosartorya fumigata) protein is Eukaryotic translation initiation factor 3 subunit E (int6).